Reading from the N-terminus, the 161-residue chain is Phosphopantetheine adenylyltransferase (161 aa).

Ser8 is a binding site for substrate. Residues 8–9 (SF) and His16 each bind ATP. Lys40, Thr72, and Arg86 together coordinate substrate. ATP-binding positions include 87 to 89 (GLR), Glu97, and 122 to 128 (HSFLSSS).

Belongs to the bacterial CoaD family. In terms of assembly, homohexamer. Requires Mg(2+) as cofactor.

It localises to the cytoplasm. It catalyses the reaction (R)-4'-phosphopantetheine + ATP + H(+) = 3'-dephospho-CoA + diphosphate. The protein operates within cofactor biosynthesis; coenzyme A biosynthesis; CoA from (R)-pantothenate: step 4/5. Its function is as follows. Reversibly transfers an adenylyl group from ATP to 4'-phosphopantetheine, yielding dephospho-CoA (dPCoA) and pyrophosphate. The protein is Phosphopantetheine adenylyltransferase of Gloeobacter violaceus (strain ATCC 29082 / PCC 7421).